The sequence spans 168 residues: Transcriptional repressor NrdR (168 aa).

The interval 1–21 (MQCPACRHTDSRVLESRSSES) is disordered. A zinc finger spans residues 3–34 (CPACRHTDSRVLESRSSESGRSVRRRRECLSC). Positions 7–20 (RHTDSRVLESRSSE) are enriched in basic and acidic residues. The region spanning 49-139 (ISVIKRNGDR…VYRQFRGVRD (91 aa)) is the ATP-cone domain.

Belongs to the NrdR family. Zn(2+) is required as a cofactor.

In terms of biological role, negatively regulates transcription of bacterial ribonucleotide reductase nrd genes and operons by binding to NrdR-boxes. The sequence is that of Transcriptional repressor NrdR from Synechococcus elongatus (strain ATCC 33912 / PCC 7942 / FACHB-805) (Anacystis nidulans R2).